A 162-amino-acid polypeptide reads, in one-letter code: MGVTTAARSLLLTEFVSAFFLAMRYFFKPKPTLNYPFEKGPISPRFRGEHALRRYPNGEERCIACKLCEAVCPAQAITIEAGPRRNDGTRRTERYDIDMVKCIYCGLCQEACPVDAIVEGPNFEFATETREELYYDKAKLLANGDRWEREIAKHMALDAPYR.

4Fe-4S ferredoxin-type domains are found at residues leucine 52 to glycine 82 and glutamate 93 to asparagine 122. Residues cysteine 62, cysteine 65, cysteine 68, cysteine 72, cysteine 102, cysteine 105, cysteine 108, and cysteine 112 each contribute to the [4Fe-4S] cluster site.

This sequence belongs to the complex I 23 kDa subunit family. In terms of assembly, NDH-1 is composed of 14 different subunits. Subunits NuoA, H, J, K, L, M, N constitute the membrane sector of the complex. [4Fe-4S] cluster serves as cofactor.

The protein localises to the cell inner membrane. The enzyme catalyses a quinone + NADH + 5 H(+)(in) = a quinol + NAD(+) + 4 H(+)(out). NDH-1 shuttles electrons from NADH, via FMN and iron-sulfur (Fe-S) centers, to quinones in the respiratory chain. The immediate electron acceptor for the enzyme in this species is believed to be ubiquinone. Couples the redox reaction to proton translocation (for every two electrons transferred, four hydrogen ions are translocated across the cytoplasmic membrane), and thus conserves the redox energy in a proton gradient. In Rhodopseudomonas palustris (strain BisA53), this protein is NADH-quinone oxidoreductase subunit I 2.